A 450-amino-acid polypeptide reads, in one-letter code: Glutamyl-tRNA reductase (450 aa).

Substrate contacts are provided by residues T50–R53, S109, E114–Q116, and Q120. Catalysis depends on C51, which acts as the Nucleophile. Residue G189 to A194 participates in NADP(+) binding. The disordered stretch occupies residues N422–L450.

It belongs to the glutamyl-tRNA reductase family. In terms of assembly, homodimer.

It catalyses the reaction (S)-4-amino-5-oxopentanoate + tRNA(Glu) + NADP(+) = L-glutamyl-tRNA(Glu) + NADPH + H(+). It participates in porphyrin-containing compound metabolism; protoporphyrin-IX biosynthesis; 5-aminolevulinate from L-glutamyl-tRNA(Glu): step 1/2. Its function is as follows. Catalyzes the NADPH-dependent reduction of glutamyl-tRNA(Glu) to glutamate 1-semialdehyde (GSA). This Oleidesulfovibrio alaskensis (strain ATCC BAA-1058 / DSM 17464 / G20) (Desulfovibrio alaskensis) protein is Glutamyl-tRNA reductase.